The primary structure comprises 322 residues: GDSL esterase/lipase At5g03600 (322 aa).

The active-site Nucleophile is Ser-21. Active-site residues include Asp-295 and His-298.

Belongs to the 'GDSL' lipolytic enzyme family.

The protein is GDSL esterase/lipase At5g03600 of Arabidopsis thaliana (Mouse-ear cress).